Here is a 346-residue protein sequence, read N- to C-terminus: Large ribosomal subunit protein uL1c (346 aa).

The N-terminal 70 residues, 1 to 70 (MAACATHSSL…RASNHKFIVS (70 aa)), are a transit peptide targeting the chloroplast. Phosphotyrosine is present on Tyr-129. Residue Thr-177 is modified to Phosphothreonine. At Ser-197 the chain carries Phosphoserine.

This sequence belongs to the universal ribosomal protein uL1 family. In terms of assembly, part of the 50S ribosomal subunit.

It is found in the plastid. Its subcellular location is the chloroplast. This protein binds directly to 23S ribosomal RNA. This Arabidopsis thaliana (Mouse-ear cress) protein is Large ribosomal subunit protein uL1c (RPL1).